Reading from the N-terminus, the 372-residue chain is 18-hydroxynorfluorocurarine reductase (372 aa).

The Zn(2+) site is built by Cys-47, Asp-50, His-69, Glu-70, Cys-100, Cys-103, Cys-106, Cys-114, and Cys-172. Residues 197–202, Lys-226, 283–285, Ser-307, and Arg-354 contribute to the NADP(+) site; these read GLGGIG and LGA.

This sequence belongs to the zinc-containing alcohol dehydrogenase family. As to quaternary structure, homodimer. Zn(2+) serves as cofactor. Mainly expressed in roots.

It catalyses the reaction (19E)-cur-19-en-17-al + NADP(+) = norfluorocurarine + NADPH + H(+). It carries out the reaction 17,18-epoxy-17-hydroxycur-19-ene + NADP(+) = 18-hydroxynorfluorocurarine + NADPH + H(+). The protein operates within alkaloid biosynthesis. In terms of biological role, alcohol dehydrogenase involved in the biosynthesis of curare monoterpene indole alkaloids (MIAs), natural products such as strychnine, a neurotoxic compound used as a pesticide to control rodents, and its pharmacologically active derivatives, including brucine, used to regulate blood pressure. Curare alkaloids act as animal glycine receptor antagonists. Catalyzes the conversion of norfluorocurarine to desoxy Wieland-Gumlich aldehyde, and of 18-OH norfluorocurarine to Wieland-Gumlich aldehyde. The polypeptide is 18-hydroxynorfluorocurarine reductase (Strychnos nux-vomica (Poison nut)).